The sequence spans 250 residues: Anamorsin homolog 1 (250 aa).

The interval 1-104 is N-terminal SAM-like domain; the sequence is MNLKITINQQ…KKLNIPQQEF (104 aa). Positions 104–149 are linker; that stretch reads FNNCYGKYDYIEQKFQNQINFFKQVDINGKQEIIDENELLDDGVQV. Positions 155, 162, 165, and 167 each coordinate [2Fe-2S] cluster. The interval 155 to 167 is fe-S binding site A; the sequence is CASKPRACANCTC. Positions 193, 196, 204, and 207 each coordinate [4Fe-4S] cluster. 2 short sequence motifs (cx2C motif) span residues 193–196 and 204–207; these read CGSC and CANC. The tract at residues 193–207 is fe-S binding site B; it reads CGSCYLGDAFRCANC.

This sequence belongs to the anamorsin family. In terms of assembly, monomer. [2Fe-2S] cluster serves as cofactor. [4Fe-4S] cluster is required as a cofactor.

Its subcellular location is the cytoplasm. The protein resides in the mitochondrion intermembrane space. Its function is as follows. Component of the cytosolic iron-sulfur (Fe-S) protein assembly (CIA) machinery. Required for the maturation of extramitochondrial Fe-S proteins. Part of an electron transfer chain functioning in an early step of cytosolic Fe-S biogenesis, facilitating the de novo assembly of a [4Fe-4S] cluster on the cytosolic Fe-S scaffold complex. Electrons are transferred from NADPH via a FAD- and FMN-containing diflavin oxidoreductase. Together with the diflavin oxidoreductase, also required for the assembly of the diferric tyrosyl radical cofactor of ribonucleotide reductase (RNR), probably by providing electrons for reduction during radical cofactor maturation in the catalytic small subunit. In Paramecium tetraurelia, this protein is Anamorsin homolog 1.